The chain runs to 88 residues: Small ribosomal subunit protein bS20 (88 aa).

Residues 1-21 (MANSAQAKKRARQNVKARKHN) are disordered. The span at 7–21 (AKKRARQNVKARKHN) shows a compositional bias: basic residues.

The protein belongs to the bacterial ribosomal protein bS20 family.

In terms of biological role, binds directly to 16S ribosomal RNA. This is Small ribosomal subunit protein bS20 from Acinetobacter baumannii (strain AB307-0294).